The primary structure comprises 401 residues: L-methionine gamma-lyase (401 aa).

Residues 59–61 (YTR) and 89–90 (GI) contribute to the pyridoxal 5'-phosphate site. A substrate-binding site is contributed by Y114. 210–212 (SAT) provides a ligand contact to pyridoxal 5'-phosphate. K213 carries the N6-(pyridoxal phosphate)lysine modification. R377 lines the substrate pocket.

It belongs to the trans-sulfuration enzymes family. L-methionine gamma-lyase subfamily. As to quaternary structure, homotetramer; dimer of active dimers. Requires pyridoxal 5'-phosphate as cofactor.

It catalyses the reaction L-methionine + H2O = methanethiol + 2-oxobutanoate + NH4(+). The enzyme catalyses L-homocysteine + H2O = 2-oxobutanoate + hydrogen sulfide + NH4(+) + H(+). Catalyzes the alpha,gamma-elimination of L-methionine to produce methanethiol, 2-oxobutanoate and ammonia; methanethiol (methyl mercaptan) is considered to be one of the main causes of the oral malodor associated with periodontitis and may also play a role in the pathogenicity of T.denticola. Also displays homocysteine desulfhydrase activity, degrading homocysteine to produce hydrogen sulfide, 2-oxobutanoate and ammonia. This chain is L-methionine gamma-lyase, found in Treponema denticola (strain ATCC 35405 / DSM 14222 / CIP 103919 / JCM 8153 / KCTC 15104).